Consider the following 313-residue polypeptide: Probable alpha-L-glutamate ligase (313 aa).

One can recognise an ATP-grasp domain in the interval 112–294; it reads LQMLMAQGIA…IALQMIVHLE (183 aa). ATP is bound by residues lysine 148, 185-186, aspartate 194, and 218-220; these read EF and RAN. Mg(2+) is bound by residues aspartate 255, glutamate 267, and asparagine 269. Residues aspartate 255, glutamate 267, and asparagine 269 each coordinate Mn(2+).

This sequence belongs to the RimK family. It depends on Mg(2+) as a cofactor. Requires Mn(2+) as cofactor.

In Pasteurella multocida (strain Pm70), this protein is Probable alpha-L-glutamate ligase.